The chain runs to 546 residues: MDLQYYKIFKQKTSQGMVGLLRPLKKRGSENVFKLRLNHKSTPSATDYFFVQDEPAFPIFVFKIPKEVNYLLDHEFEVSKNMKQLTTYLPHFNTILEIKRDVKCHVPEKLCPQALDDPFAKYNCTRDVAIVEYIPSKTTLLEYILGTNFTRCTDSLIHQLILALFIAQQQVQFSHYDLHLENVLIRRCFKRTFFWYKFSYEHATFQRLILTNGLFPVIFDYGFAHSTNVEGSSYYNSLFFTNKGYTPMVFDDVVDFKTLLIRMAHLYHCPQKFKTLVASNFLKNPQLPYKVDRETGWIKSSDKSIARIVCTQMEEVLKDHLGAEYESNFIYKELEQIIDLFMVLIKLPLVETEFNVKELEYHVGTFVDEWGKIDAWFSHGFTDDKLNILKKIFTLVNELILEQSERSTKTTRQLVKRFQLAVYEILDQFGEFVHVQQLDYGSLFHSIVQLSEFIEHVAYKELTRHQTDYPSGGVTGWSLFTQIEQCTSSVEPYLFRLDDHIVLFDCIDQATSFFELKDVDIVESLNQCGTISNQIRLLDSLDLVDH.

It belongs to the IIV-6 098R family.

This is an uncharacterized protein from Aedes vexans (Inland floodwater mosquito).